The sequence spans 304 residues: Protein translocase subunit SecF (304 aa).

6 helical membrane passes run 20-40 (AKLF…LIFT), 143-163 (AMMA…IRFE), 164-184 (LIFA…TLGF), 195-215 (TVVA…IVVF), 244-266 (LSRT…IFGG), and 276-298 (LVIG…VYLI).

This sequence belongs to the SecD/SecF family. SecF subfamily. In terms of assembly, forms a complex with SecD. Part of the essential Sec protein translocation apparatus which comprises SecA, SecYEG and auxiliary proteins SecDF. Other proteins may also be involved.

The protein resides in the cell inner membrane. Its function is as follows. Part of the Sec protein translocase complex. Interacts with the SecYEG preprotein conducting channel. SecDF uses the proton motive force (PMF) to complete protein translocation after the ATP-dependent function of SecA. The chain is Protein translocase subunit SecF from Calditerrivibrio nitroreducens (strain DSM 19672 / NBRC 101217 / Yu37-1).